The primary structure comprises 412 residues: MGDYVLRCLTGGEVLEDHYTLACPHHPGFVRAEYTAKQLTVRENLPGVFRFSDWLPVRGSVPTRSRPVTFQNRELCRELGQPNLWITFTGYYPERGCYVPTGSFKELEALPTIVRLNEAGGGTLVVASAGNTGRAFAQMSAEFGTPVVLVVPESSADKLWTAGYFDHSSIRLVTVRGDYTDAIKTADKICEAPGFFPEGGGKNIARRDGMGCVMLDGAVTIGKLPEYYFQAVGSGTGGIAAWEAAIRLIGDGRFGSKFPELHLSQNLPFVPMVRAWNAGRDHIIDEDMPDAQASISAVSAHVLTNRTPPYGICGGVYDAMKSCGGQMYTVENKDAASAASLFAEAENGIDIDPAAAVAFASLISAAEEGSIRTNADILLNITGGGYQRVKKDCETAKIGVYETVDTGEVPVL.

An N6-(pyridoxal phosphate)lysine modification is found at Lys105. Pyridoxal 5'-phosphate contacts are provided by Asn131 and Thr382.

This sequence belongs to the threonine synthase family. Cysteate synthase subfamily. As to quaternary structure, homotrimer. It depends on pyridoxal 5'-phosphate as a cofactor.

The enzyme catalyses O-phospho-L-serine + sulfite + H(+) = L-cysteate + phosphate. It functions in the pathway cofactor biosynthesis; coenzyme M biosynthesis. In terms of biological role, specifically catalyzes the beta-elimination of phosphate from L-phosphoserine and the beta-addition of sulfite to the dehydroalanine intermediate to produce L-cysteate. The protein is Cysteate synthase of Methanocorpusculum labreanum (strain ATCC 43576 / DSM 4855 / Z).